We begin with the raw amino-acid sequence, 188 residues long: 3-deoxy-D-manno-octulosonate 8-phosphate phosphatase KdsC (188 aa).

Mg(2+)-binding residues include Asp32 and Asp34. Residues Asp34, 55-59 (NVRDG), Arg63, Arg78, Arg86, and Lys102 contribute to the substrate site. Asp125 lines the Mg(2+) pocket.

Belongs to the KdsC family. As to quaternary structure, homotetramer. The cofactor is Mg(2+).

The catalysed reaction is 3-deoxy-alpha-D-manno-2-octulosonate-8-phosphate + H2O = 3-deoxy-alpha-D-manno-oct-2-ulosonate + phosphate. It functions in the pathway carbohydrate biosynthesis; 3-deoxy-D-manno-octulosonate biosynthesis; 3-deoxy-D-manno-octulosonate from D-ribulose 5-phosphate: step 3/3. The protein operates within bacterial outer membrane biogenesis; lipopolysaccharide biosynthesis. Functionally, catalyzes the hydrolysis of 3-deoxy-D-manno-octulosonate 8-phosphate (KDO 8-P) to 3-deoxy-D-manno-octulosonate (KDO) and inorganic phosphate. This Escherichia coli (strain K12) protein is 3-deoxy-D-manno-octulosonate 8-phosphate phosphatase KdsC.